The sequence spans 261 residues: 1-(5-phosphoribosyl)-5-[(5-phosphoribosylamino)methylideneamino] imidazole-4-carboxamide isomerase (261 aa).

Catalysis depends on D8, which acts as the Proton acceptor. D139 acts as the Proton donor in catalysis.

Belongs to the HisA/HisF family.

It is found in the cytoplasm. The enzyme catalyses 1-(5-phospho-beta-D-ribosyl)-5-[(5-phospho-beta-D-ribosylamino)methylideneamino]imidazole-4-carboxamide = 5-[(5-phospho-1-deoxy-D-ribulos-1-ylimino)methylamino]-1-(5-phospho-beta-D-ribosyl)imidazole-4-carboxamide. The protein operates within amino-acid biosynthesis; L-histidine biosynthesis; L-histidine from 5-phospho-alpha-D-ribose 1-diphosphate: step 4/9. The chain is 1-(5-phosphoribosyl)-5-[(5-phosphoribosylamino)methylideneamino] imidazole-4-carboxamide isomerase from Janthinobacterium sp. (strain Marseille) (Minibacterium massiliensis).